Consider the following 350-residue polypeptide: MSLKGKKITVHDMTLRDGMHPKRHQMTLEQMKSVATGLDAAGVPLIEVTHGDGLGGSSVNYGFPAHTDEEYLSTVIPLMKQAKVSALLLPGIGTVDHLKMAHELGVSTIRVATHCTEADVSEQHIAMARKMGMDTVGFLMMAHMYSAEGLVKQAKLMEGYGANCIYITDSAGYMLPDDVKERLSAVRQALKPETELGFHGHHNLAMGIANSLAAVEVGANRIDAAAAGLGAGAGNTPMEVLVAVCARMGIETGVDVFKIQDVAEDLVVPLMDFPIRIDRDALTLGYAGVYGSFLLFAKRAEAKYGIPARELLLELGRRGMVGGQEDMIEDTALTMVRERQKLGHKVAVAA.

In terms of domain architecture, Pyruvate carboxyltransferase spans Ile-8–Gln-260. Substrate is bound at residue Arg-16–Asp-17. A Mn(2+)-binding site is contributed by Asp-17. His-20 serves as the catalytic Proton acceptor. The substrate site is built by Ser-170 and His-199. Residues His-199 and His-201 each coordinate Mn(2+). A substrate-binding site is contributed by Tyr-290.

The protein belongs to the 4-hydroxy-2-oxovalerate aldolase family.

The enzyme catalyses (S)-4-hydroxy-2-oxopentanoate = acetaldehyde + pyruvate. This Comamonas testosteroni (Pseudomonas testosteroni) protein is 4-hydroxy-2-oxovalerate aldolase 2 (tesG).